The primary structure comprises 205 residues: Quinone-oxidoreductase QR2 (205 aa).

A Flavodoxin-like domain is found at 5–192 (VYIVYYSTYG…LKQAFHQGMY (188 aa)). Residues 11-15 (STYGH), 112-165 (IFFS…SPYG), and His-136 each bind FMN. Tyr-13 is a binding site for NAD(+).

This sequence belongs to the WrbA family. Requires FMN as cofactor.

It catalyses the reaction a quinone + NADH + H(+) = a quinol + NAD(+). The enzyme catalyses a quinone + NADPH + H(+) = a quinol + NADP(+). Its activity is regulated as follows. Inhibited by dicumarol. Its function is as follows. NAD(P)H:quinone oxidoreductase reducing quinones by a two-electron transfer mechanism. Can use either NADPH or NADH as electron donor. Can use menadione, 5-hydroxy-1,4-naphthoquinone (juglone) and 2,6-dimethoxy-p-benzoquinone (DMBQ) as substrates. Mitigates the toxicity of exogenous quinones in the rhizosphere. The sequence is that of Quinone-oxidoreductase QR2 from Triphysaria versicolor (Yellow owl's clover).